Consider the following 266-residue polypeptide: MLKRIKVGSDLNKKESLLDAFVKTYLQTLEPISSKRLKELANLKVSCATIRNYFQILSKEGMLHQAHSSGARLPTFKAFENYWHKSLRFEVLKVNEKRLKSASENFGLFTLLKKPSLERLERVIECEKRFLILDFLAFSCAVGYSVKMEKFLLELVGRSVKEVRLIAASVNALSLARQLERLEYSSAQITRFNLMGLKTLLNSPLFFDILEGKVLERFKKGLHFIEPDCMLVTRPIEFQNERMQLLCVGKLECDYEGFFQTISKEE.

Belongs to the HrcA family.

Its function is as follows. Negative regulator of class I heat shock genes (grpE-dnaK-dnaJ and groELS operons). Prevents heat-shock induction of these operons. The sequence is that of Heat-inducible transcription repressor HrcA from Helicobacter pylori (strain J99 / ATCC 700824) (Campylobacter pylori J99).